The primary structure comprises 137 residues: MLQPKRTKFRKTHKGRNRGLANSGNEVSFGTFGLKATSRGQLTARQIEAARRAMTRHVKRQGKIWIRVFPDKPITEKPLEVRMGKGKGNVEYWVCPIQPGKVLYEMDGVPEALAREAFALAAAKLSVQTTFVIKTVM.

Residues 1–17 (MLQPKRTKFRKTHKGRN) are compositionally biased toward basic residues. The segment at 1–24 (MLQPKRTKFRKTHKGRNRGLANSG) is disordered.

It belongs to the universal ribosomal protein uL16 family. As to quaternary structure, part of the 50S ribosomal subunit.

Binds 23S rRNA and is also seen to make contacts with the A and possibly P site tRNAs. The chain is Large ribosomal subunit protein uL16 from Aeromonas hydrophila subsp. hydrophila (strain ATCC 7966 / DSM 30187 / BCRC 13018 / CCUG 14551 / JCM 1027 / KCTC 2358 / NCIMB 9240 / NCTC 8049).